Here is a 282-residue protein sequence, read N- to C-terminus: sn-glycerol-3-phosphate transport system permease protein UgpE (282 aa).

The next 6 membrane-spanning stretches (helical) occupy residues 14–34, 86–106, 112–132, 146–168, 201–221, and 248–268; these read LILI…FVAS, MAIA…IVFF, MFFF…RILP, YAGL…QFFL, IAAL…WPLL, and WNYV…VVVL. The ABC transmembrane type-1 domain occupies 78 to 269; sequence LWNSFVVAMA…IPPILVVVLM (192 aa).

Belongs to the binding-protein-dependent transport system permease family. The complex is composed of two ATP-binding proteins (UgpC), two transmembrane proteins (UgpA and UgpE) and a solute-binding protein (UgpB).

Its subcellular location is the cell inner membrane. In terms of biological role, part of the ABC transporter complex UgpBAEC involved in sn-glycerol-3-phosphate (G3P) import. Probably responsible for the translocation of the substrate across the membrane. This Brucella suis biovar 1 (strain 1330) protein is sn-glycerol-3-phosphate transport system permease protein UgpE (ugpE).